Reading from the N-terminus, the 182-residue chain is Ribulose bisphosphate carboxylase small subunit, chloroplastic 4 (182 aa).

The N-terminal 41 residues, 1 to 41 (MSAAMMNKSVVLSKQCTKPAATPKVVTSKRSFASTVANKNR), are a transit peptide targeting the chloroplast.

Belongs to the RuBisCO small chain family. As to quaternary structure, heterohexadecamer of 8 large and 8 small subunits.

It is found in the plastid. The protein localises to the chloroplast. RuBisCO catalyzes two reactions: the carboxylation of D-ribulose 1,5-bisphosphate, the primary event in carbon dioxide fixation, as well as the oxidative fragmentation of the pentose substrate. Both reactions occur simultaneously and in competition at the same active site. Although the small subunit is not catalytic it is essential for maximal activity. This is Ribulose bisphosphate carboxylase small subunit, chloroplastic 4 from Acetabularia acetabulum (Mermaid's wine glass).